The primary structure comprises 263 residues: Tryptophan synthase alpha chain (263 aa).

Catalysis depends on proton acceptor residues Glu-49 and Asp-60.

The protein belongs to the TrpA family. Tetramer of two alpha and two beta chains.

It catalyses the reaction (1S,2R)-1-C-(indol-3-yl)glycerol 3-phosphate + L-serine = D-glyceraldehyde 3-phosphate + L-tryptophan + H2O. Its pathway is amino-acid biosynthesis; L-tryptophan biosynthesis; L-tryptophan from chorismate: step 5/5. Its function is as follows. The alpha subunit is responsible for the aldol cleavage of indoleglycerol phosphate to indole and glyceraldehyde 3-phosphate. This Jannaschia sp. (strain CCS1) protein is Tryptophan synthase alpha chain.